Here is a 206-residue protein sequence, read N- to C-terminus: Small ribosomal subunit protein uS2 (206 aa).

Belongs to the universal ribosomal protein uS2 family.

This is Small ribosomal subunit protein uS2 from Methanothrix thermoacetophila (strain DSM 6194 / JCM 14653 / NBRC 101360 / PT) (Methanosaeta thermophila).